Here is a 692-residue protein sequence, read N- to C-terminus: Protein arginine N-methyltransferase 7 (692 aa).

SAM-dependent MTase PRMT-type domains lie at 14–345 and 358–684; these read SLEW…YCVW and EVYQ…ITME. The residue at position 32 (R32) is an Omega-N-methylarginine. Catalysis depends on residues E144 and E153.

Belongs to the class I-like SAM-binding methyltransferase superfamily. Protein arginine N-methyltransferase family. PRMT7 subfamily. As to quaternary structure, interacts with CTCFL, PRMT5 and SNRPD3. Homodimer and heterodimer.

It localises to the cytoplasm. It is found in the nucleus. The catalysed reaction is L-arginyl-[protein] + S-adenosyl-L-methionine = N(omega)-methyl-L-arginyl-[protein] + S-adenosyl-L-homocysteine + H(+). Functionally, arginine methyltransferase that can both catalyze the formation of omega-N monomethylarginine (MMA) and symmetrical dimethylarginine (sDMA), with a preference for the formation of MMA. Specifically mediates the symmetrical dimethylation of arginine residues in the small nuclear ribonucleoproteins Sm D1 (SNRPD1) and Sm D3 (SNRPD3); such methylation being required for the assembly and biogenesis of snRNP core particles. Specifically mediates the symmetric dimethylation of histone H4 'Arg-3' to form H4R3me2s. Plays a role in gene imprinting by being recruited by CTCFL at the H19 imprinted control region (ICR) and methylating histone H4 to form H4R3me2s, possibly leading to recruit DNA methyltransferases at these sites. May also play a role in embryonic stem cell (ESC) pluripotency. Also able to mediate the arginine methylation of histone H2A and myelin basic protein (MBP) in vitro; the relevance of such results is however unclear in vivo. In Cricetulus longicaudatus (Long-tailed dwarf hamster), this protein is Protein arginine N-methyltransferase 7 (Prmt7).